A 523-amino-acid chain; its full sequence is Spastin (523 aa).

Residues 1–41 lie on the Cytoplasmic side of the membrane; it reads MLDKLSKHKTMFYERVKEIDQILFSQQQAKQTQLDNLSNNN. The helical intramembrane region spans 42 to 58; the sequence is ASGGFFSGFMKMFSPLS. 3 stretches are compositionally biased toward low complexity: residues 57-71, 171-184, and 193-210; these read LSTP…NSNT, QQPP…QQQP, and TALR…TANN. Disordered stretches follow at residues 57–77 and 129–218; these read LSTP…AISQ and GISS…LDQI. At 59 to 523 the chain is on the cytoplasmic side; that stretch reads TPPNSSSNNN…ESYGTFAKGI (465 aa).

The protein belongs to the AAA ATPase family. Spastin subfamily. In terms of assembly, homohexamer. The homohexamer is stabilized by ATP-binding. The homohexamer may adopt a ring conformation through which microtubules pass prior to being severed.

The protein resides in the membrane. The enzyme catalyses n ATP + n H2O + a microtubule = n ADP + n phosphate + (n+1) alpha/beta tubulin heterodimers.. In terms of biological role, ATP-dependent microtubule severing protein. Stimulates microtubule minus-end depolymerization and poleward microtubule flux in the mitotic spindle. This is Spastin from Naegleria gruberi (Amoeba).